A 271-amino-acid polypeptide reads, in one-letter code: MPELPEVETIRRAVGPQVRGKRIIHTNVRATKLRHPLPPELDRLLVGQLIVAMDRRGKYLLLRCKGGTIIFHLGMTGMLYLVKASSPHGKHDHLDLVLDGSYILRFTDPRRFGTIIWTDNDPLQHPLLVAHGPEPLEAEFSASYLYLKRHRRKIPIKQLIMDSRVVAGIGNIYANESLFRAGIAPQTSASDLSPDKDLLLVDAIKGVLTDAVEAGTSNIESALTGERPQGYFPYEFSIYGKKGRPCPKCGSAIRMMRLGGRSTFFCPLCQK.

P2 serves as the catalytic Schiff-base intermediate with DNA. E3 acts as the Proton donor in catalysis. K58 functions as the Proton donor; for beta-elimination activity in the catalytic mechanism. The DNA site is built by H91, R110, and R152. Residues 237 to 271 (SIYGKKGRPCPKCGSAIRMMRLGGRSTFFCPLCQK) form an FPG-type zinc finger. R261 (proton donor; for delta-elimination activity) is an active-site residue.

Belongs to the FPG family. In terms of assembly, monomer. Zn(2+) serves as cofactor.

It catalyses the reaction Hydrolysis of DNA containing ring-opened 7-methylguanine residues, releasing 2,6-diamino-4-hydroxy-5-(N-methyl)formamidopyrimidine.. The enzyme catalyses 2'-deoxyribonucleotide-(2'-deoxyribose 5'-phosphate)-2'-deoxyribonucleotide-DNA = a 3'-end 2'-deoxyribonucleotide-(2,3-dehydro-2,3-deoxyribose 5'-phosphate)-DNA + a 5'-end 5'-phospho-2'-deoxyribonucleoside-DNA + H(+). Functionally, involved in base excision repair of DNA damaged by oxidation or by mutagenic agents. Acts as a DNA glycosylase that recognizes and removes damaged bases. Has a preference for oxidized purines, such as 7,8-dihydro-8-oxoguanine (8-oxoG). Has AP (apurinic/apyrimidinic) lyase activity and introduces nicks in the DNA strand. Cleaves the DNA backbone by beta-delta elimination to generate a single-strand break at the site of the removed base with both 3'- and 5'-phosphates. The chain is Formamidopyrimidine-DNA glycosylase from Geotalea daltonii (strain DSM 22248 / JCM 15807 / FRC-32) (Geobacter daltonii).